We begin with the raw amino-acid sequence, 1029 residues long: 2-oxoglutarate dehydrogenase, mitochondrial (1029 aa).

Residues Arg-317, Asp-415, Asn-448, Ile-450, and Gln-676 each coordinate thiamine diphosphate. Positions 415, 448, and 450 each coordinate Mg(2+).

The protein belongs to the alpha-ketoglutarate dehydrogenase family. In terms of assembly, homodimer. Component of the 2-oxoglutarate dehydrogenase complex. Thiamine diphosphate is required as a cofactor. It depends on Mg(2+) as a cofactor.

The protein localises to the mitochondrion matrix. It carries out the reaction N(6)-[(R)-lipoyl]-L-lysyl-[protein] + 2-oxoglutarate + H(+) = N(6)-[(R)-S(8)-succinyldihydrolipoyl]-L-lysyl-[protein] + CO2. In terms of biological role, the 2-oxoglutarate dehydrogenase complex catalyzes the overall conversion of 2-oxoglutarate to succinyl-CoA and CO(2). It contains multiple copies of three enzymatic components: 2-oxoglutarate dehydrogenase (E1), dihydrolipoamide succinyltransferase (E2) and lipoamide dehydrogenase (E3). This Caenorhabditis elegans protein is 2-oxoglutarate dehydrogenase, mitochondrial (ogdh-1).